The primary structure comprises 385 residues: Spindle pole component BBP1 (385 aa).

At Ser29 the chain carries Phosphoserine. Residues 34–48 (YKDQEERRDRSRYAQ) show a composition bias toward basic and acidic residues. The interval 34 to 76 (YKDQEERRDRSRYAQDDTNFSMKFGNDSNRRSTNLSRSNSWSG) is disordered. The segment covering 64-75 (RSTNLSRSNSWS) has biased composition (low complexity). Phosphoserine is present on residues Ser73 and Ser115. The stretch at 229–355 (QMDLNSRDLE…KDMQRDNYES (127 aa)) forms a coiled coil.

Belongs to the BBP1 family. As to quaternary structure, homodimer. Interacts with KAR1, MPS2 and SPC29.

Its subcellular location is the cytoplasm. The protein localises to the cytoskeleton. It is found in the microtubule organizing center. It localises to the spindle pole body. Its function is as follows. Component of the spindle pole body (SPB) required for insertion of the nascent SPB into the nuclear envelope and for the proper execution of spindle pole body (SPB) duplication. Connects the central plaque of the SPB with the half-bridge. Required for proper localization of CDC5 at the SPB and for proper M-phase progression. The sequence is that of Spindle pole component BBP1 (BBP1) from Saccharomyces cerevisiae (strain ATCC 204508 / S288c) (Baker's yeast).